Consider the following 372-residue polypeptide: Uroporphyrinogen decarboxylase (372 aa).

Substrate is bound by residues 35-39 (RQAGR), Asp85, Tyr166, Ser221, and His342.

Belongs to the uroporphyrinogen decarboxylase family. As to quaternary structure, homodimer.

The protein resides in the cytoplasm. The catalysed reaction is uroporphyrinogen III + 4 H(+) = coproporphyrinogen III + 4 CO2. Its pathway is porphyrin-containing compound metabolism; protoporphyrin-IX biosynthesis; coproporphyrinogen-III from 5-aminolevulinate: step 4/4. Catalyzes the decarboxylation of four acetate groups of uroporphyrinogen-III to yield coproporphyrinogen-III. This chain is Uroporphyrinogen decarboxylase, found in Methylibium petroleiphilum (strain ATCC BAA-1232 / LMG 22953 / PM1).